The primary structure comprises 568 residues: Methyl-accepting chemotaxis protein CtpH (568 aa).

Residues 1-39 (MPASPGHRDVLGCLVAACVPVQPGNPSRRSMLQQSLRAQ) are Cytoplasmic-facing. The chain crosses the membrane as a helical span at residues 40–60 (ILVLLGGSLAALLLIALACFG). Residues 61–216 (SLTGDVRAYR…ISAEARRTML (156 aa)) are Periplasmic-facing. A helical transmembrane segment spans residues 217 to 237 (LGSLVLIGASLAVALLSLWLV). The Cytoplasmic segment spans residues 238 to 568 (NRNLVRPVQR…LGDALQRLRA (331 aa)). In terms of domain architecture, HAMP spans 239–291 (RNLVRPVQRLIEHIAQLSHGDFGERIEIRRKDELGKLALAANTLRDFLVDIFD). In terms of domain architecture, Methyl-accepting transducer spans 296 to 532 (STRDLDSASG…EISRNLTEIA (237 aa)).

The protein belongs to the methyl-accepting chemotaxis (MCP) protein family.

It is found in the cell inner membrane. In terms of biological role, chemotactic-signal transducers respond to changes in the concentration of attractants and repellents in the environment, transduce a signal from the outside to the inside of the cell, and facilitate sensory adaptation through the variation of the level of methylation. Chemoreceptor for inorganic phosphate, which is required for taxis at high concentrations of phosphate. Recognizes inorganic phosphate directly. Can also bind to other components that have a pyrophosphate group, including ATP and ADP. This Pseudomonas aeruginosa (strain ATCC 15692 / DSM 22644 / CIP 104116 / JCM 14847 / LMG 12228 / 1C / PRS 101 / PAO1) protein is Methyl-accepting chemotaxis protein CtpH.